The primary structure comprises 376 residues: GTPase Obg (376 aa).

The region spanning 2–161 is the Obg domain; the sequence is ASFVDEVLIR…RVVHVELRIV (160 aa). Residues 162–328 form the OBG-type G domain; it reads ADVGFVGLPN…LQEAFVRLSD (167 aa). GTP contacts are provided by residues 168–175, 193–197, 215–218, 282–285, and 309–311; these read GLPNAGKS, FTTRI, DVPG, TKLD, and SVH. Residues S175 and T195 each coordinate Mg(2+).

This sequence belongs to the TRAFAC class OBG-HflX-like GTPase superfamily. OBG GTPase family. As to quaternary structure, monomer. The cofactor is Mg(2+).

The protein localises to the cytoplasm. In terms of biological role, an essential GTPase which binds GTP, GDP and possibly (p)ppGpp with moderate affinity, with high nucleotide exchange rates and a fairly low GTP hydrolysis rate. Plays a role in control of the cell cycle, stress response, ribosome biogenesis and in those bacteria that undergo differentiation, in morphogenesis control. This is GTPase Obg from Treponema pallidum (strain Nichols).